The sequence spans 476 residues: Aspartyl/glutamyl-tRNA(Asn/Gln) amidotransferase subunit B (476 aa).

It belongs to the GatB/GatE family. GatB subfamily. In terms of assembly, heterotrimer of A, B and C subunits.

It catalyses the reaction L-glutamyl-tRNA(Gln) + L-glutamine + ATP + H2O = L-glutaminyl-tRNA(Gln) + L-glutamate + ADP + phosphate + H(+). The enzyme catalyses L-aspartyl-tRNA(Asn) + L-glutamine + ATP + H2O = L-asparaginyl-tRNA(Asn) + L-glutamate + ADP + phosphate + 2 H(+). Allows the formation of correctly charged Asn-tRNA(Asn) or Gln-tRNA(Gln) through the transamidation of misacylated Asp-tRNA(Asn) or Glu-tRNA(Gln) in organisms which lack either or both of asparaginyl-tRNA or glutaminyl-tRNA synthetases. The reaction takes place in the presence of glutamine and ATP through an activated phospho-Asp-tRNA(Asn) or phospho-Glu-tRNA(Gln). In Bacillus velezensis (strain DSM 23117 / BGSC 10A6 / LMG 26770 / FZB42) (Bacillus amyloliquefaciens subsp. plantarum), this protein is Aspartyl/glutamyl-tRNA(Asn/Gln) amidotransferase subunit B.